Here is a 135-residue protein sequence, read N- to C-terminus: HTH-type transcriptional regulator CueR (135 aa).

The region spanning 1–69 (MNISDVAKIT…LEESGELVNL (69 aa)) is the HTH merR-type domain. The segment at residues 4–23 (SDVAKITGLTSKAIRFYEEK) is a DNA-binding region (H-T-H motif). 2 residues coordinate Cu(+): Cys-112 and Cys-120.

As to quaternary structure, homodimer.

The protein resides in the cytoplasm. Functionally, regulates the transcription of the copA and cueO genes. It detects cytoplasmic copper stress and activates transcription in response to increasing copper concentrations. The chain is HTH-type transcriptional regulator CueR (cueR) from Escherichia coli O6:H1 (strain CFT073 / ATCC 700928 / UPEC).